We begin with the raw amino-acid sequence, 393 residues long: Methylthioribose kinase (393 aa).

Residues Asn38, Lys53, and 107 to 109 each bind ATP; that span reads EDL. Asp225 lines the substrate pocket. Residue 242 to 244 coordinates ATP; sequence DPE. Position 332 (Arg332) interacts with substrate.

It belongs to the methylthioribose kinase family. As to quaternary structure, homodimer.

It catalyses the reaction 5-(methylsulfanyl)-D-ribose + ATP = 5-(methylsulfanyl)-alpha-D-ribose 1-phosphate + ADP + H(+). It functions in the pathway amino-acid biosynthesis; L-methionine biosynthesis via salvage pathway; S-methyl-5-thio-alpha-D-ribose 1-phosphate from S-methyl-5'-thioadenosine (hydrolase route): step 2/2. In terms of biological role, catalyzes the phosphorylation of methylthioribose into methylthioribose-1-phosphate. The protein is Methylthioribose kinase of Bacillus cereus (strain B4264).